The following is a 186-amino-acid chain: Large ribosomal subunit protein uL5 (186 aa).

This sequence belongs to the universal ribosomal protein uL5 family. Part of the 50S ribosomal subunit; part of the 5S rRNA/L5/L18/L25 subcomplex. Contacts the 5S rRNA and the P site tRNA. Forms a bridge to the 30S subunit in the 70S ribosome.

Functionally, this is one of the proteins that bind and probably mediate the attachment of the 5S RNA into the large ribosomal subunit, where it forms part of the central protuberance. In the 70S ribosome it contacts protein S13 of the 30S subunit (bridge B1b), connecting the 2 subunits; this bridge is implicated in subunit movement. Contacts the P site tRNA; the 5S rRNA and some of its associated proteins might help stabilize positioning of ribosome-bound tRNAs. The sequence is that of Large ribosomal subunit protein uL5 from Ruegeria pomeroyi (strain ATCC 700808 / DSM 15171 / DSS-3) (Silicibacter pomeroyi).